Reading from the N-terminus, the 334-residue chain is MEPFSKFFKSFRRYHRFHPLDSSSASDDELAGKYEEHLLMDERLKRETVIFKSRIWILLTITNLIILGITVSMIVTSHCQLYAGKNADLRPISWWSPILDAIEIPTYETTLNGTFFAKPEVSIAREEPGPENDADWEQYETIRTHIVSREDILRLGKDPDTVMRFDNDYWGFGDDAYMVQLDVMHQIHCLNMLRKAAFHDYPGYVPTGAHTDANNTHASRWTHLGHCVDILLQNIQCNANTEVITLAWVEGRTQPWPDFSVNRKCRDFEAIYKWQLENSVDAGKFDRMPIPHDAYVWPAPWENRESELGEKLGKHQKQEGVLGQAGHQHTKRHE.

A helical membrane pass occupies residues 55-75 (IWILLTITNLIILGITVSMIV). An N-linked (GlcNAc...) asparagine glycan is attached at N112. The HXXHC 1 signature appears at 185–189 (HQIHC). N214 carries N-linked (GlcNAc...) asparagine glycosylation. An HXXHC 2 motif is present at residues 223 to 227 (HLGHC). The span at 306-318 (SELGEKLGKHQKQ) shows a compositional bias: basic and acidic residues. The disordered stretch occupies residues 306–334 (SELGEKLGKHQKQEGVLGQAGHQHTKRHE).

It belongs to the ustYa family.

The protein resides in the membrane. It participates in secondary metabolite biosynthesis. Its function is as follows. UstYa family oxidase; part of the gene cluster that mediates the biosynthesis of the asperipin-2a, a bicyclic peptide that possesses two macrocyclic ether rings consisting of 14- and 17-membered paracyclophans. Within the pathway, aprY is responsible for the synthesis of the bicyclic structure of asperipin-2a. The pathway starts with the processing of the precursor aprA by kexin proteases to produce 11 identical copies of the hexapeptide Phe-Tyr-Tyr-Thr-Gly-Tyr. Macrocyclization of asperipin-2a may accompany an alpha-hydroxylation-dehydration sequence to give an imine, which is readily hydrolyzed to yield putative ketone intermediate. The reductase aprR may be required for the final reduction to yield asperipin-2a. In Aspergillus flavus (strain ATCC 200026 / FGSC A1120 / IAM 13836 / NRRL 3357 / JCM 12722 / SRRC 167), this protein is UstYa family oxidase aprY.